Here is a 242-residue protein sequence, read N- to C-terminus: Methylthioribulose-1-phosphate dehydratase (242 aa).

The segment covering methionine 1–aspartate 11 has biased composition (basic and acidic residues). The segment at methionine 1 to glutamate 20 is disordered. Position 100 (cysteine 100) interacts with substrate. Zn(2+)-binding residues include histidine 117 and histidine 119. The Proton donor/acceptor role is filled by glutamate 146. Histidine 202 serves as a coordination point for Zn(2+).

This sequence belongs to the aldolase class II family. MtnB subfamily. The cofactor is Zn(2+).

The protein localises to the cytoplasm. The catalysed reaction is 5-(methylsulfanyl)-D-ribulose 1-phosphate = 5-methylsulfanyl-2,3-dioxopentyl phosphate + H2O. It participates in amino-acid biosynthesis; L-methionine biosynthesis via salvage pathway; L-methionine from S-methyl-5-thio-alpha-D-ribose 1-phosphate: step 2/6. Functionally, catalyzes the dehydration of methylthioribulose-1-phosphate (MTRu-1-P) into 2,3-diketo-5-methylthiopentyl-1-phosphate (DK-MTP-1-P). The chain is Methylthioribulose-1-phosphate dehydratase from Aspergillus niger (strain ATCC MYA-4892 / CBS 513.88 / FGSC A1513).